Consider the following 120-residue polypeptide: UPF0231 protein Ent638_0667 (120 aa).

It belongs to the UPF0231 family.

This Enterobacter sp. (strain 638) protein is UPF0231 protein Ent638_0667.